The primary structure comprises 360 residues: Mitogen-activated protein kinase 14 (360 aa).

S2 is subject to N-acetylserine. S2 carries the post-translational modification Phosphoserine. The residue at position 16 (T16) is a Phosphothreonine. In terms of domain architecture, Protein kinase spans 24 to 308 (YQNLSPVGSG…AAQALAHAYF (285 aa)). ATP is bound by residues 30–38 (VGSGAYGSV) and K53. 2 positions are modified to N6-acetyllysine: K53 and K152. The Proton acceptor role is filled by D168. Residue T180 is modified to Phosphothreonine; by MAP2K3, MAP2K4, MAP2K6 and autocatalysis. Residues 180-182 (TGY) carry the TXY motif. At Y182 the chain carries Phosphotyrosine; by MAP2K3, MAP2K4, MAP2K6 and autocatalysis. Residue T263 is modified to Phosphothreonine. Phosphotyrosine; by ZAP70 is present on Y323.

The protein belongs to the protein kinase superfamily. CMGC Ser/Thr protein kinase family. MAP kinase subfamily. As to quaternary structure, component of a signaling complex containing at least AKAP13, PKN1, MAPK14, ZAK and MAP2K3. Within this complex, AKAP13 interacts directly with PKN1, which in turn recruits MAPK14, MAP2K3 and ZAK. Binds to a kinase interaction motif within the protein tyrosine phosphatase, PTPRR. This interaction retains MAPK14 in the cytoplasm and prevents nuclear accumulation. Interacts with SPAG9 and GADD45A. Interacts with CDC25B, CDC25C, DUSP1, DUSP10, DUSP16, NP60, SUPT20H and TAB1. Interacts with casein kinase II subunits CSNK2A1 and CSNK2B. Interacts with PPM1D. Interacts with CDK5RAP3; recruits PPM1D to MAPK14 and may regulate its dephosphorylation. Interacts with DUSP2; this interaction does not lead to catalytic activation of DUSP2 and dephosphrylation of MAPK14. It depends on Mg(2+) as a cofactor. Post-translationally, dually phosphorylated on Thr-180 and Tyr-182 by the MAP2Ks MAP2K3/MKK3, MAP2K4/MKK4 and MAP2K6/MKK6 in response to inflammatory citokines, environmental stress or growth factors, which activates the enzyme. Dual phosphorylation can also be mediated by TAB1-mediated autophosphorylation. TCR engagement in T-cells also leads to Tyr-323 phosphorylation by ZAP70. Dephosphorylated and inactivated by DUPS1, DUSP10 and DUSP16. PPM1D also mediates dephosphorylation and inactivation of MAPK14. Acetylated at Lys-53 and Lys-152 by KAT2B and EP300. Acetylation at Lys-53 increases the affinity for ATP and enhances kinase activity. Lys-53 and Lys-152 are deacetylated by HDAC3. In terms of processing, ubiquitinated. Ubiquitination leads to degradation by the proteasome pathway. In terms of tissue distribution, brain, heart, placenta, pancreas and skeletal muscle. Expressed to a lesser extent in lung, liver and kidney.

Its subcellular location is the cytoplasm. The protein resides in the nucleus. It carries out the reaction L-seryl-[protein] + ATP = O-phospho-L-seryl-[protein] + ADP + H(+). The catalysed reaction is L-threonyl-[protein] + ATP = O-phospho-L-threonyl-[protein] + ADP + H(+). With respect to regulation, activated by cell stresses such as DNA damage, heat shock, osmotic shock, anisomycin and sodium arsenite, as well as pro-inflammatory stimuli such as bacterial lipopolysaccharide (LPS) and interleukin-1. Activation occurs through dual phosphorylation of Thr-180 and Tyr-182 by either of two dual specificity kinases, MAP2K3/MKK3 or MAP2K6/MKK6, and potentially also MAP2K4/MKK4, as well as by TAB1-mediated autophosphorylation. MAPK14 phosphorylated on both Thr-180 and Tyr-182 is 10-20-fold more active than MAPK14 phosphorylated only on Thr-180, whereas MAPK14 phosphorylated on Tyr-182 alone is inactive. whereas Thr-180 is necessary for catalysis, Tyr-182 may be required for auto-activation and substrate recognition. Phosphorylated at Tyr-323 by ZAP70 in an alternative activation pathway in response to TCR signaling in T-cells. This alternative pathway is inhibited by GADD45A. Inhibited by dual specificity phosphatases, such as DUSP1, DUSP10, and DUSP16. Specifically inhibited by the binding of pyridinyl-imidazole compounds, which are cytokine-suppressive anti-inflammatory drugs (CSAID). Isoform Mxi2 is 100-fold less sensitive to these agents than the other isoforms and is not inhibited by DUSP1. Isoform Exip is not activated by MAP2K6. SB203580 is an inhibitor of MAPK14. Serine/threonine kinase which acts as an essential component of the MAP kinase signal transduction pathway. MAPK14 is one of the four p38 MAPKs which play an important role in the cascades of cellular responses evoked by extracellular stimuli such as pro-inflammatory cytokines or physical stress leading to direct activation of transcription factors. Accordingly, p38 MAPKs phosphorylate a broad range of proteins and it has been estimated that they may have approximately 200 to 300 substrates each. Some of the targets are downstream kinases which are activated through phosphorylation and further phosphorylate additional targets. RPS6KA5/MSK1 and RPS6KA4/MSK2 can directly phosphorylate and activate transcription factors such as CREB1, ATF1, the NF-kappa-B isoform RELA/NFKB3, STAT1 and STAT3, but can also phosphorylate histone H3 and the nucleosomal protein HMGN1. RPS6KA5/MSK1 and RPS6KA4/MSK2 play important roles in the rapid induction of immediate-early genes in response to stress or mitogenic stimuli, either by inducing chromatin remodeling or by recruiting the transcription machinery. On the other hand, two other kinase targets, MAPKAPK2/MK2 and MAPKAPK3/MK3, participate in the control of gene expression mostly at the post-transcriptional level, by phosphorylating ZFP36 (tristetraprolin) and ELAVL1, and by regulating EEF2K, which is important for the elongation of mRNA during translation. MKNK1/MNK1 and MKNK2/MNK2, two other kinases activated by p38 MAPKs, regulate protein synthesis by phosphorylating the initiation factor EIF4E2. MAPK14 also interacts with casein kinase II, leading to its activation through autophosphorylation and further phosphorylation of TP53/p53. In the cytoplasm, the p38 MAPK pathway is an important regulator of protein turnover. For example, CFLAR is an inhibitor of TNF-induced apoptosis whose proteasome-mediated degradation is regulated by p38 MAPK phosphorylation. In a similar way, MAPK14 phosphorylates the ubiquitin ligase SIAH2, regulating its activity towards EGLN3. MAPK14 may also inhibit the lysosomal degradation pathway of autophagy by interfering with the intracellular trafficking of the transmembrane protein ATG9. Another function of MAPK14 is to regulate the endocytosis of membrane receptors by different mechanisms that impinge on the small GTPase RAB5A. In addition, clathrin-mediated EGFR internalization induced by inflammatory cytokines and UV irradiation depends on MAPK14-mediated phosphorylation of EGFR itself as well as of RAB5A effectors. Ectodomain shedding of transmembrane proteins is regulated by p38 MAPKs as well. In response to inflammatory stimuli, p38 MAPKs phosphorylate the membrane-associated metalloprotease ADAM17. Such phosphorylation is required for ADAM17-mediated ectodomain shedding of TGF-alpha family ligands, which results in the activation of EGFR signaling and cell proliferation. Another p38 MAPK substrate is FGFR1. FGFR1 can be translocated from the extracellular space into the cytosol and nucleus of target cells, and regulates processes such as rRNA synthesis and cell growth. FGFR1 translocation requires p38 MAPK activation. In the nucleus, many transcription factors are phosphorylated and activated by p38 MAPKs in response to different stimuli. Classical examples include ATF1, ATF2, ATF6, ELK1, PTPRH, DDIT3, TP53/p53 and MEF2C and MEF2A. The p38 MAPKs are emerging as important modulators of gene expression by regulating chromatin modifiers and remodelers. The promoters of several genes involved in the inflammatory response, such as IL6, IL8 and IL12B, display a p38 MAPK-dependent enrichment of histone H3 phosphorylation on 'Ser-10' (H3S10ph) in LPS-stimulated myeloid cells. This phosphorylation enhances the accessibility of the cryptic NF-kappa-B-binding sites marking promoters for increased NF-kappa-B recruitment. Phosphorylates CDC25B and CDC25C which is required for binding to 14-3-3 proteins and leads to initiation of a G2 delay after ultraviolet radiation. Phosphorylates TIAR following DNA damage, releasing TIAR from GADD45A mRNA and preventing mRNA degradation. The p38 MAPKs may also have kinase-independent roles, which are thought to be due to the binding to targets in the absence of phosphorylation. Protein O-Glc-N-acylation catalyzed by the OGT is regulated by MAPK14, and, although OGT does not seem to be phosphorylated by MAPK14, their interaction increases upon MAPK14 activation induced by glucose deprivation. This interaction may regulate OGT activity by recruiting it to specific targets such as neurofilament H, stimulating its O-Glc-N-acylation. Required in mid-fetal development for the growth of embryo-derived blood vessels in the labyrinth layer of the placenta. Also plays an essential role in developmental and stress-induced erythropoiesis, through regulation of EPO gene expression. Isoform MXI2 activation is stimulated by mitogens and oxidative stress and only poorly phosphorylates ELK1 and ATF2. Isoform EXIP may play a role in the early onset of apoptosis. Phosphorylates S100A9 at 'Thr-113'. Phosphorylates NLRP1 downstream of MAP3K20/ZAK in response to UV-B irradiation and ribosome collisions, promoting activation of the NLRP1 inflammasome and pyroptosis. In terms of biological role, (Microbial infection) Activated by phosphorylation by M.tuberculosis EsxA in T-cells leading to inhibition of IFN-gamma production; phosphorylation is apparent within 15 minutes and is inhibited by kinase-specific inhibitors SB203580 and siRNA. The chain is Mitogen-activated protein kinase 14 from Homo sapiens (Human).